The sequence spans 289 residues: Glycerol facilitator-aquaporin gla (289 aa).

2 helical membrane passes run 10–30 (ITEF…VANV) and 41–61 (SWMI…VAFG). Positions 68 to 70 (NPA) match the NPA 1 motif. Transmembrane regions (helical) follow at residues 87–107 (AQYI…IVMV), 151–171 (FVGS…FFGS), and 209–229 (MVAH…LGGP). The NPA 2 motif lies at 235-237 (NPA). Residues 264 to 284 (WYAWVPVLAPILASLAAVALF) form a helical membrane-spanning segment.

Belongs to the MIP/aquaporin (TC 1.A.8) family.

It is found in the cell membrane. In terms of biological role, mixed channel protein that transports both water and glycerol. This is Glycerol facilitator-aquaporin gla (gla) from Lactococcus lactis subsp. lactis (strain IL1403) (Streptococcus lactis).